We begin with the raw amino-acid sequence, 233 residues long: Protein Mis18-alpha (233 aa).

Residues Ser36, Ser39, and Ser40 each carry the phosphoserine modification. The region spanning 80–178 (PLVFLCSGCR…NVEAVESYVL (99 aa)) is the Mis18 domain. Positions 85, 88, 141, and 144 each coordinate Zn(2+). A Glycyl lysine isopeptide (Lys-Gly) (interchain with G-Cter in SUMO2) cross-link involves residue Lys162. Phosphoserine is present on Ser233.

This sequence belongs to the mis18 family. Homodimer, and heterodimer with OIP5/MIS18B. Identified in a complex containing MIS18A, OIP5/MIS18B, MIS18BP1, RBBP7 and RBBP4.

The protein localises to the nucleus. Its subcellular location is the chromosome. It is found in the centromere. Its function is as follows. Required for recruitment of CENPA to centromeres and normal chromosome segregation during mitosis. This Plecturocebus moloch (Dusky titi monkey) protein is Protein Mis18-alpha (MIS18A).